Here is a 243-residue protein sequence, read N- to C-terminus: tRNA1(Val) (adenine(37)-N6)-methyltransferase (243 aa).

This sequence belongs to the methyltransferase superfamily. tRNA (adenine-N(6)-)-methyltransferase family.

It is found in the cytoplasm. The catalysed reaction is adenosine(37) in tRNA1(Val) + S-adenosyl-L-methionine = N(6)-methyladenosine(37) in tRNA1(Val) + S-adenosyl-L-homocysteine + H(+). Specifically methylates the adenine in position 37 of tRNA(1)(Val) (anticodon cmo5UAC). This chain is tRNA1(Val) (adenine(37)-N6)-methyltransferase, found in Shewanella woodyi (strain ATCC 51908 / MS32).